A 340-amino-acid polypeptide reads, in one-letter code: tRNA N6-adenosine threonylcarbamoyltransferase (340 aa).

The Fe cation site is built by His-111 and His-115. Residues 134 to 138, Asp-167, Gly-180, and Asn-276 each bind substrate; that span reads LVSGG. Asp-304 contacts Fe cation.

This sequence belongs to the KAE1 / TsaD family. Fe(2+) is required as a cofactor.

It localises to the cytoplasm. It carries out the reaction L-threonylcarbamoyladenylate + adenosine(37) in tRNA = N(6)-L-threonylcarbamoyladenosine(37) in tRNA + AMP + H(+). In terms of biological role, required for the formation of a threonylcarbamoyl group on adenosine at position 37 (t(6)A37) in tRNAs that read codons beginning with adenine. Is involved in the transfer of the threonylcarbamoyl moiety of threonylcarbamoyl-AMP (TC-AMP) to the N6 group of A37, together with TsaE and TsaB. TsaD likely plays a direct catalytic role in this reaction. In Helicobacter pylori (strain ATCC 700392 / 26695) (Campylobacter pylori), this protein is tRNA N6-adenosine threonylcarbamoyltransferase.